The primary structure comprises 358 residues: tRNA-specific 2-thiouridylase MnmA (358 aa).

Residues 6–13 and M32 each bind ATP; that span reads ALSGGVDS. C103 acts as the Nucleophile in catalysis. A disulfide bond links C103 and C201. Residue G127 coordinates ATP. The interaction with tRNA stretch occupies residues 151-153; the sequence is KDQ. The active-site Cysteine persulfide intermediate is the C201.

It belongs to the MnmA/TRMU family.

It is found in the cytoplasm. It carries out the reaction S-sulfanyl-L-cysteinyl-[protein] + uridine(34) in tRNA + AH2 + ATP = 2-thiouridine(34) in tRNA + L-cysteinyl-[protein] + A + AMP + diphosphate + H(+). Functionally, catalyzes the 2-thiolation of uridine at the wobble position (U34) of tRNA, leading to the formation of s(2)U34. The protein is tRNA-specific 2-thiouridylase MnmA of Thermotoga maritima (strain ATCC 43589 / DSM 3109 / JCM 10099 / NBRC 100826 / MSB8).